The following is a 967-amino-acid chain: Kinesin-like protein KIF28P (967 aa).

The Kinesin motor domain maps to 7 to 355; it reads DSVKAVRVRP…LRYAERERKI (349 aa). 111–118 contributes to the ATP binding site; the sequence is GQTGSGKS. In terms of domain architecture, FHA spans 410–472; that stretch reads APCPRPALSP…LQHLDRLILG (63 aa). Residues 822 to 851 are a coiled coil; the sequence is NQIPELYLKLLKLEQETEPLRNINRALREE.

This sequence belongs to the TRAFAC class myosin-kinesin ATPase superfamily. Kinesin family.

It is found in the mitochondrion membrane. In terms of biological role, microtubule-dependent motor protein required for mitochondrion morphology and transport of mitochondria in neuronal cells. This is Kinesin-like protein KIF28P (KIF28P) from Homo sapiens (Human).